The primary structure comprises 248 residues: Small ribosomal subunit protein eS6 (248 aa).

A disordered region spans residues 215-248 (VQRKKESKAKREEAKRRRSASIRESKSSVSSDKK). Positions 223–248 (AKREEAKRRRSASIRESKSSVSSDKK) are enriched in basic and acidic residues. Phosphoserine occurs at positions 233, 235, 239, 242, 244, and 245.

This sequence belongs to the eukaryotic ribosomal protein eS6 family. As to quaternary structure, component of the small ribosomal subunit. Part of the small subunit (SSU) processome, composed of more than 70 proteins and the RNA chaperone small nucleolar RNA (snoRNA) U3. Post-translationally, ribosomal protein S6 is the major substrate of protein kinases in eukaryote ribosomes. The phosphorylation is stimulated by growth factors, tumor promoting agents, and mitogens. It is dephosphorylated at growth arrest.

The protein resides in the cytoplasm. It localises to the nucleus. Its subcellular location is the nucleolus. Functionally, component of the 40S small ribosomal subunit. Plays an important role in controlling cell growth and proliferation through the selective translation of particular classes of mRNA. Part of the small subunit (SSU) processome, first precursor of the small eukaryotic ribosomal subunit. During the assembly of the SSU processome in the nucleolus, many ribosome biogenesis factors, an RNA chaperone and ribosomal proteins associate with the nascent pre-rRNA and work in concert to generate RNA folding, modifications, rearrangements and cleavage as well as targeted degradation of pre-ribosomal RNA by the RNA exosome. The sequence is that of Small ribosomal subunit protein eS6 (RpS6) from Drosophila melanogaster (Fruit fly).